The primary structure comprises 87 residues: Putative septation protein SpoVG (87 aa).

The protein belongs to the SpoVG family.

Could be involved in septation. This is Putative septation protein SpoVG from Agathobacter rectalis (strain ATCC 33656 / DSM 3377 / JCM 17463 / KCTC 5835 / VPI 0990) (Eubacterium rectale).